The sequence spans 224 residues: Octanoyltransferase (224 aa).

The 181-residue stretch at 33 to 213 (GTTAETMLLL…ALQAEFGREA (181 aa)) folds into the BPL/LPL catalytic domain. The disordered stretch occupies residues 51 to 71 (GKRTTDDERPTDGTPVVDVDR). Substrate contacts are provided by residues 71-78 (RGGKITWH), 143-145 (AIG), and 156-158 (GFA). Cys-174 functions as the Acyl-thioester intermediate in the catalytic mechanism.

The protein belongs to the LipB family.

The protein localises to the cytoplasm. The catalysed reaction is octanoyl-[ACP] + L-lysyl-[protein] = N(6)-octanoyl-L-lysyl-[protein] + holo-[ACP] + H(+). The protein operates within protein modification; protein lipoylation via endogenous pathway; protein N(6)-(lipoyl)lysine from octanoyl-[acyl-carrier-protein]: step 1/2. Its function is as follows. Catalyzes the transfer of endogenously produced octanoic acid from octanoyl-acyl-carrier-protein onto the lipoyl domains of lipoate-dependent enzymes. Lipoyl-ACP can also act as a substrate although octanoyl-ACP is likely to be the physiological substrate. In Leifsonia xyli subsp. xyli (strain CTCB07), this protein is Octanoyltransferase.